Here is a 371-residue protein sequence, read N- to C-terminus: Liposome tubulation protein MamY (371 aa).

Topologically, residues M1–R18 are cytoplasmic. The helical transmembrane segment at I19–S39 threads the bilayer. The Lumenal portion of the chain corresponds to G40 to E51. The chain crosses the membrane as a helical span at residues I52–L72. The Cytoplasmic portion of the chain corresponds to S73–A371.

The protein belongs to the magnetosome MamY family. As to quaternary structure, probably interacts with MamX and MamZ proteins.

The protein localises to the magnetosome membrane. In terms of biological role, may be involved in constriction of the cell inner membrane to form mature magnetosomes. Binds cardiolipin and liposomes. May function with MamX, MamZ amd Mms6 in biomineralization. The protein is Liposome tubulation protein MamY of Magnetospirillum gryphiswaldense (strain DSM 6361 / JCM 21280 / NBRC 15271 / MSR-1).